We begin with the raw amino-acid sequence, 77 residues long: Blood-induced peptide 1 (77 aa).

Residues 38–71 (EDFLHQENSELKKSLKNLEMENEKLKNILKTDYN) adopt a coiled-coil conformation.

Plays an important role in survival in host blood through increasing tolerance to stresses such as heat, salt, or cycloheximide, which is essential for virulence. This Candida albicans (strain SC5314 / ATCC MYA-2876) (Yeast) protein is Blood-induced peptide 1.